We begin with the raw amino-acid sequence, 1076 residues long: Structural maintenance of chromosomes protein 5 (1076 aa).

ATP is bound at residue 49–56; that stretch reads GHNGSGKS. A coiled-coil region spans residues 190–415; that stretch reads STSIEDKCTT…KRDEEQNSQL (226 aa). Over residues 375-410 the composition is skewed to basic and acidic residues; it reads EQKYSTAERDSRQEEDAIQKKSYEMRQLENKKRDEE. Residues 375 to 420 form a disordered region; it reads EQKYSTAERDSRQEEDAIQKKSYEMRQLENKKRDEEQNSQLNRQDR. The interval 416–617 is flexible hinge; the sequence is NRQDRYRVLQ…ANTWRDQFFK (202 aa). 2 coiled-coil regions span residues 627-713 and 749-786; these read NSIL…EKKA and KSRVNKSNSEAETHRSKLEDLKSVKDAAEDLLKTALNH.

This sequence belongs to the SMC family. SMC5 subfamily. Interacts with smc-6. Expressed in the germline (at protein level).

The protein resides in the nucleus. It localises to the chromosome. Core component of the smc-5/smc-6 complex. Functions in DNA double strand break repair by promoting sister-chromatid homologous recombination during meiosis. Acts in a DNA repair pathway for removal of ionizing radiation- and ultraviolet (UV) radiation-induced DNA lesions that is distinct from classical nucleotide excision repair and the translesion synthesis pathway. Also involved in the recovery of stalled replication forks. In Caenorhabditis elegans, this protein is Structural maintenance of chromosomes protein 5.